The sequence spans 274 residues: MSLQNDIITALGVKSSIEPAQEIRVSVDFLKNYLNAHPFVTSLVLGISGGQDSTLTGKLCQTAITELRNETGNARYQFIAVRLPYGVQADEADCQDAIAFIQPDRVLTVNIKPAIEASEATLRAIGVELSDFVKGNEKARERMKAQYSIAGMNAGLVVGTDHAAEAVTGFFTKYGDGGTDINPIFRLNKRQGKALLRELGCPSHLYTKAPTADLEEDRPSLPDEVALGVTYEKIDDYLEGKQIEAKDAAIIENWYRKTEHKRRPPITVFDDFWR.

Position 46–53 (46–53 (GISGGQDS)) interacts with ATP. Mg(2+) is bound at residue Asp-52. A deamido-NAD(+)-binding site is contributed by Arg-140. Thr-160 contacts ATP. Residue Glu-165 coordinates Mg(2+). Lys-173 and Asp-180 together coordinate deamido-NAD(+). Residues Lys-189 and Thr-211 each coordinate ATP. 260 to 261 (HK) contacts deamido-NAD(+).

This sequence belongs to the NAD synthetase family. As to quaternary structure, homodimer.

It catalyses the reaction deamido-NAD(+) + NH4(+) + ATP = AMP + diphosphate + NAD(+) + H(+). It functions in the pathway cofactor biosynthesis; NAD(+) biosynthesis; NAD(+) from deamido-NAD(+) (ammonia route): step 1/1. Catalyzes the ATP-dependent amidation of deamido-NAD to form NAD. Uses ammonia as a nitrogen source. The polypeptide is NH(3)-dependent NAD(+) synthetase (Pectobacterium carotovorum subsp. carotovorum (strain PC1)).